The chain runs to 545 residues: CTP synthase (545 aa).

The segment at 1-266 (MTHFIFVTGG…DDLICERFGY (266 aa)) is amidoligase domain. Residue Ser13 coordinates CTP. Ser13 is a binding site for UTP. Residues 14 to 19 (SLGKGI) and Asp71 contribute to the ATP site. Mg(2+)-binding residues include Asp71 and Glu140. Residues 147-149 (DIE), 187-192 (KTKPTQ), and Lys223 contribute to the CTP site. UTP is bound by residues 187 to 192 (KTKPTQ) and Lys223. An ATP-binding site is contributed by 239–241 (KDA). In terms of domain architecture, Glutamine amidotransferase type-1 spans 292 to 543 (RVAMVGKYVE…IDAAKKQHLK (252 aa)). Gly353 contributes to the L-glutamine binding site. Cys380 serves as the catalytic Nucleophile; for glutamine hydrolysis. L-glutamine is bound by residues 381–384 (LGMQ), Glu404, and Arg471. Catalysis depends on residues His516 and Glu518.

The protein belongs to the CTP synthase family. In terms of assembly, homotetramer.

The enzyme catalyses UTP + L-glutamine + ATP + H2O = CTP + L-glutamate + ADP + phosphate + 2 H(+). The catalysed reaction is L-glutamine + H2O = L-glutamate + NH4(+). It carries out the reaction UTP + NH4(+) + ATP = CTP + ADP + phosphate + 2 H(+). It functions in the pathway pyrimidine metabolism; CTP biosynthesis via de novo pathway; CTP from UDP: step 2/2. Its activity is regulated as follows. Allosterically activated by GTP, when glutamine is the substrate; GTP has no effect on the reaction when ammonia is the substrate. The allosteric effector GTP functions by stabilizing the protein conformation that binds the tetrahedral intermediate(s) formed during glutamine hydrolysis. Inhibited by the product CTP, via allosteric rather than competitive inhibition. Its function is as follows. Catalyzes the ATP-dependent amination of UTP to CTP with either L-glutamine or ammonia as the source of nitrogen. Regulates intracellular CTP levels through interactions with the four ribonucleotide triphosphates. The protein is CTP synthase of Acinetobacter baylyi (strain ATCC 33305 / BD413 / ADP1).